Reading from the N-terminus, the 93-residue chain is Small ribosomal subunit protein uS19m (93 aa).

It belongs to the universal ribosomal protein uS19 family.

The protein resides in the mitochondrion. This chain is Small ribosomal subunit protein uS19m (RPS19), found in Marchantia polymorpha (Common liverwort).